A 169-amino-acid polypeptide reads, in one-letter code: Interleukin-36 gamma (169 aa).

A propeptide spanning residues 1-17 (MRGTPGDADGGGRAVYQ) is cleaved from the precursor.

Belongs to the IL-1 family. In terms of assembly, interacts with cargo receptor TMED10; the interaction mediates the translocation from the cytoplasm into the ERGIC (endoplasmic reticulum-Golgi intermediate compartment) and thereby secretion. In terms of processing, N-terminal truncation leads to a dramatic enhancement of its activity (&gt;1000-fold). Proteolytically cleaved by cathepsin CTSG. As to expression, highly expressed in tissues containing epithelial cells: skin, lung, stomach and esophagus. Expressed in bronchial epithelial. In skin is expressed only in keratinocytes but not in fibroblasts, endothelial cells or melanocytes. Up-regulated in lesional psoriasis skin. Expressed in monocyte-derived dendritic cells and M1 macrophages.

It localises to the cytoplasm. It is found in the secreted. Cytokine that binds to and signals through the IL1RL2/IL-36R receptor which in turn activates NF-kappa-B and MAPK signaling pathways in target cells. Part of the IL-36 signaling system that is thought to be present in epithelial barriers and to take part in local inflammatory response; similar to the IL-1 system with which it shares the coreceptor IL1RAP. Seems to be involved in skin inflammatory response by acting on keratinocytes, dendritic cells and indirectly on T-cells to drive tissue infiltration, cell maturation and cell proliferation. In cultured keratinocytes induces the expression of macrophage, T-cell, and neutrophil chemokines, such as CCL3, CCL4, CCL5, CCL2, CCL17, CCL22, CL20, CCL5, CCL2, CCL17, CCL22, CXCL8, CCL20 and CXCL1; also stimulates its own expression and that of the prototypic cutaneous pro-inflammatory parameters TNF-alpha, S100A7/psoriasin and inducible NOS. May play a role in pro-inflammatory responses during particular neutrophilic airway inflammation: activates mitogen-activated protein kinases and NF-kappa B in primary lung fibroblasts, and stimulates the expression of IL-8 and CXCL3 and Th17 chemokine CCL20 in lung fibroblasts. May be involved in the innate immune response to fungal pathogens, such as Aspergillus fumigatus. This chain is Interleukin-36 gamma, found in Homo sapiens (Human).